The primary structure comprises 65 residues: Mating-type pheromone BBP1(2) (65 aa).

A Cysteine methyl ester modification is found at Cys-62. Cys-62 carries the S-farnesyl cysteine lipid modification. Positions 63 to 65 are cleaved as a propeptide — removed in mature form; sequence VVA.

It localises to the cell membrane. Functionally, activates B-regulated development. The sequence is that of Mating-type pheromone BBP1(2) (BBP1(2)) from Schizophyllum commune (Split gill fungus).